The chain runs to 527 residues: G patch domain-containing protein 2 (527 aa).

The tract at residues 35 to 135 (LEESSEQARG…RPSSNLSSSV (101 aa)) is disordered. Residues 62–76 (RQARKRRGRKRRSYN) are compositionally biased toward basic residues. The span at 97-116 (EPSKDYREKHSNNKKDRSDS) shows a compositional bias: basic and acidic residues. A phosphoserine mark is found at Ser-114, Ser-116, and Ser-145. Disordered stretches follow at residues 175–281 (SSKR…GDDE), 350–375 (TPSK…GSNK), and 480–527 (TPGS…GNPA). Over residues 186–196 (GCRDQDMDNDR) the composition is skewed to basic and acidic residues. The span at 206 to 215 (KKVKKRKLKG) shows a compositional bias: basic residues. Basic and acidic residues predominate over residues 231 to 257 (SEERSQPNKDRMEYEEQKASDELRSES). A G-patch domain is found at 466 to 512 (ESNIGNRMLQSMGWTPGSGLGRDGRGIAEPVQAVQRPKGLGLGFPLP). Positions 510–527 (PLPKSSPTSPAPTSGNPA) are enriched in low complexity.

As to quaternary structure, interacts with DHX15.

The protein localises to the nucleus speckle. It is found in the nucleus. The protein resides in the nucleolus. Functionally, enhances the ATPase activity of DHX15 in vitro. This Mus musculus (Mouse) protein is G patch domain-containing protein 2 (Gpatch2).